We begin with the raw amino-acid sequence, 283 residues long: Isochorismatase domain-containing protein 1 (283 aa).

Belongs to the isochorismatase family.

The sequence is that of Isochorismatase domain-containing protein 1 (isoc1) from Danio rerio (Zebrafish).